The chain runs to 1113 residues: Carbamoyl phosphate synthase large chain (1113 aa).

The segment at 1–407 is carboxyphosphate synthetic domain; that stretch reads MPKRSDINHV…ALNKALRSLE (407 aa). Residues Arg-134, Arg-174, Gly-180, Gly-181, Glu-213, Ile-215, Glu-220, Gly-246, Val-247, His-248, Gln-290, and Glu-304 each coordinate ATP. The 196-residue stretch at 138 to 333 folds into the ATP-grasp 1 domain; that stretch reads KDIVTTIGGE…IAKMAAKLAI (196 aa). The Mg(2+) site is built by Gln-290, Glu-304, and Asn-306. Residues Gln-290, Glu-304, and Asn-306 each coordinate Mn(2+). Residues 408-565 form an oligomerization domain region; that stretch reads TKQQGFWTKP…ELDPAAESEV (158 aa). Positions 566–967 are carbamoyl phosphate synthetic domain; the sequence is APQTEREKVL…AYAKAEAGAF (402 aa). Residues 695–886 form the ATP-grasp 2 domain; it reads GALLNREQLP…LAKAASRIAV (192 aa). 10 residues coordinate ATP: Arg-731, Arg-770, Leu-772, Glu-777, Gly-802, Ile-803, His-804, Ser-805, Gln-845, and Glu-857. Mg(2+) contacts are provided by Gln-845, Glu-857, and Asn-859. Gln-845, Glu-857, and Asn-859 together coordinate Mn(2+). An MGS-like domain is found at 968–1113; that stretch reads GALPTEGTVF…LQELDHAVKA (146 aa). Residues 968 to 1113 are allosteric domain; it reads GALPTEGTVF…LQELDHAVKA (146 aa).

Belongs to the CarB family. As to quaternary structure, composed of two chains; the small (or glutamine) chain promotes the hydrolysis of glutamine to ammonia, which is used by the large (or ammonia) chain to synthesize carbamoyl phosphate. Tetramer of heterodimers (alpha,beta)4. Mg(2+) serves as cofactor. Requires Mn(2+) as cofactor.

The catalysed reaction is hydrogencarbonate + L-glutamine + 2 ATP + H2O = carbamoyl phosphate + L-glutamate + 2 ADP + phosphate + 2 H(+). It catalyses the reaction hydrogencarbonate + NH4(+) + 2 ATP = carbamoyl phosphate + 2 ADP + phosphate + 2 H(+). It participates in amino-acid biosynthesis; L-arginine biosynthesis; carbamoyl phosphate from bicarbonate: step 1/1. Its pathway is pyrimidine metabolism; UMP biosynthesis via de novo pathway; (S)-dihydroorotate from bicarbonate: step 1/3. In terms of biological role, large subunit of the glutamine-dependent carbamoyl phosphate synthetase (CPSase). CPSase catalyzes the formation of carbamoyl phosphate from the ammonia moiety of glutamine, carbonate, and phosphate donated by ATP, constituting the first step of 2 biosynthetic pathways, one leading to arginine and/or urea and the other to pyrimidine nucleotides. The large subunit (synthetase) binds the substrates ammonia (free or transferred from glutamine from the small subunit), hydrogencarbonate and ATP and carries out an ATP-coupled ligase reaction, activating hydrogencarbonate by forming carboxy phosphate which reacts with ammonia to form carbamoyl phosphate. The sequence is that of Carbamoyl phosphate synthase large chain from Corynebacterium glutamicum (strain ATCC 13032 / DSM 20300 / JCM 1318 / BCRC 11384 / CCUG 27702 / LMG 3730 / NBRC 12168 / NCIMB 10025 / NRRL B-2784 / 534).